The chain runs to 409 residues: 4-hydroxy-3-methylbut-2-en-1-yl diphosphate synthase (ferredoxin) (409 aa).

Positions 1 to 12 are enriched in polar residues; the sequence is MQTLDRPNAPTQ. The disordered stretch occupies residues 1 to 22; that stretch reads MQTLDRPNAPTQQPYPEPVYPR. [4Fe-4S] cluster is bound by residues Cys314, Cys317, Cys348, and Glu355.

It belongs to the IspG family. The cofactor is [4Fe-4S] cluster.

It catalyses the reaction (2E)-4-hydroxy-3-methylbut-2-enyl diphosphate + 2 oxidized [2Fe-2S]-[ferredoxin] + H2O = 2-C-methyl-D-erythritol 2,4-cyclic diphosphate + 2 reduced [2Fe-2S]-[ferredoxin] + H(+). Its pathway is isoprenoid biosynthesis; isopentenyl diphosphate biosynthesis via DXP pathway; isopentenyl diphosphate from 1-deoxy-D-xylulose 5-phosphate: step 5/6. Functionally, converts 2C-methyl-D-erythritol 2,4-cyclodiphosphate (ME-2,4cPP) into 1-hydroxy-2-methyl-2-(E)-butenyl 4-diphosphate. This is 4-hydroxy-3-methylbut-2-en-1-yl diphosphate synthase (ferredoxin) from Synechococcus sp. (strain JA-2-3B'a(2-13)) (Cyanobacteria bacterium Yellowstone B-Prime).